Here is a 246-residue protein sequence, read N- to C-terminus: Mast cell protease 1 (246 aa).

An N-terminal signal peptide occupies residues 1-18 (MQALLFLMALLLPSGAGA). Residues 19 to 20 (EE) constitute a propeptide, activation peptide. In terms of domain architecture, Peptidase S1 spans 21–244 (IIGGVEARPH…YVPWIKTVIN (224 aa)). A disulfide bridge links C50 with C66. H65 acts as the Charge relay system in catalysis. A glycan (N-linked (GlcNAc...) asparagine) is linked at N102. Catalysis depends on D109, which acts as the Charge relay system. 2 disulfides stabilise this stretch: C143–C208 and C174–C187. Catalysis depends on S202, which acts as the Charge relay system.

Belongs to the peptidase S1 family. Granzyme subfamily. In terms of tissue distribution, mucosal mast cells.

It localises to the secreted. The protein localises to the cytoplasmic granule. Has a chymotrypsin-like activity. The chain is Mast cell protease 1 (Mcpt1) from Mus musculus (Mouse).